A 529-amino-acid chain; its full sequence is MKKIMLVFITLILVSLPIAQQTEAKDASAFNKENSISSMAPPASPPASPKTPIEKKHADEIDKYIQGLDYNKNNVLVYHGDAVTNVPPRKGYKDGNEYIVVEKKKKSINQNNADIQVVNAISSLTYPGALVKANSELVENQPDVLPVKRDSLTLSIDLPGMTNQDNKIVVKNATKSNVNNAVNTLVERWNEKYAQAYPNVSAKIDYDDEMAYSESQLIAKFGTAFKAVNNSLNVNFGAISEGKMQEEVISFKQIYYNVNVNEPTRPSRFFGKAVTKEQLQALGVNAENPPAYISSVAYGRQVYLKLSTNSHSTKVKAAFDAAVSGKSVSGDVELTNIIKNSSFKAVIYGGSAKDEVQIIDGNLGDLRDILKKGATFNRETPGVPIAYTTNFLKDNELAVIKNNSEYIETTSKAYTDGKINIDHSGGYVAQFNISWDEVNYDPEGNEIVQHKNWSENNKSKLAHFTSSIYLPGNARNINVYAKECTGLAWEWWRTVIDDRNLPLVKNRNISIWGTTLYPKYSNKVDNPIE.

The N-terminal stretch at 1-24 (MKKIMLVFITLILVSLPIAQQTEA) is a signal peptide. Residues 35–54 (SISSMAPPASPPASPKTPIE) form a disordered region. The next 4 membrane-spanning stretches (beta stranded) occupy residues 214–227 (ESQLIAKFGTAFKA), 234–243 (VNFGAISEGK), 312–321 (STKVKAAFDA), and 329–341 (SGDVELTNIIKNS). Positions 483–493 (ECTGLAWEWWR) match the Conserved undecapeptide motif. A Cholesterol binding motif is present at residues 515-516 (TL).

The protein belongs to the cholesterol-dependent cytolysin family. As to quaternary structure, homooligomeric pore complex of 35 to 50 subunits; when inserted in the host membrane.

It localises to the secreted. The protein localises to the host membrane. The protein resides in the host cell membrane. With respect to regulation, activity of listeriolysin O is regulated on multiple levels. It should be high in the phagosome, thereby allowing escape of the bacteria from the phagosomal compartment. Then, once inside the host cytosol, the activity must be controlled to prevent lysis of the host plasma membrane and loss of the intracellular environment. Its function is as follows. A cholesterol-dependent toxin that causes cytolysis by forming pores in cholesterol containing host membranes. After binding to target membranes, the protein undergoes a major conformation change, leading to its insertion in the host membrane and formation of an oligomeric pore complex. Cholesterol is required for binding to host membranes, membrane insertion and pore formation; cholesterol binding is mediated by a Thr-Leu pair in the C-terminus. Acts as a major virulence factor required for the escape of bacteria from phagosomal vacuoles and entry into the host cytosol. Can be reversibly inactivated by oxidation. In Listeria monocytogenes serotype 1/2a (strain 08-5578), this protein is Listeriolysin O (hly).